Here is a 906-residue protein sequence, read N- to C-terminus: Protein translocase subunit SecA (906 aa).

ATP is bound by residues glutamine 89, 107 to 111, and aspartate 502; that span reads GEGKT. Zn(2+) is bound by residues cysteine 885, cysteine 887, cysteine 896, and histidine 897.

The protein belongs to the SecA family. As to quaternary structure, monomer and homodimer. Part of the essential Sec protein translocation apparatus which comprises SecA, SecYEG and auxiliary proteins SecDF-YajC and YidC. Zn(2+) serves as cofactor.

Its subcellular location is the cell inner membrane. The protein localises to the cytoplasm. It carries out the reaction ATP + H2O + cellular proteinSide 1 = ADP + phosphate + cellular proteinSide 2.. In terms of biological role, part of the Sec protein translocase complex. Interacts with the SecYEG preprotein conducting channel. Has a central role in coupling the hydrolysis of ATP to the transfer of proteins into and across the cell membrane, serving both as a receptor for the preprotein-SecB complex and as an ATP-driven molecular motor driving the stepwise translocation of polypeptide chains across the membrane. This is Protein translocase subunit SecA from Rhizobium rhizogenes (strain K84 / ATCC BAA-868) (Agrobacterium radiobacter).